The sequence spans 816 residues: Sodium/hydrogen exchanger 1 (816 aa).

Topologically, residues 1–98 (MLLWSAVRGL…FPVLGIDYTH (98 aa)) are extracellular. A compositionally biased stretch (polar residues) spans 37-50 (LQLSPTDSTTPDSQ). The interval 37–79 (LQLSPTDSTTPDSQPSRERSIGDVTTAPPEVTPESRPVNRSVT) is disordered. Asn75 carries N-linked (GlcNAc...) asparagine glycosylation. Residues 99 to 121 (VRTPFEISLWILLACLMKIGFHV) traverse the membrane as a helical segment. Residues 122–130 (IPTISSIVP) lie on the Cytoplasmic side of the membrane. Residues 131-148 (ESCLLIVVGLLVGGLIKG) form a helical membrane-spanning segment. Over 149-158 (VGEKPPFLQS) the chain is Extracellular. The helical transmembrane segment at 159–176 (EVFFLFLLPPIILDAGYF) threads the bilayer. The Cytoplasmic segment spans residues 177 to 186 (LPLRQFTENL). A helical membrane pass occupies residues 187 to 215 (GTILIFAVVGTLWNAFFLGGLMYAVCLVG). The Extracellular portion of the chain corresponds to 216–222 (GEQINNI). The chain crosses the membrane as a helical span at residues 223–249 (GLLDNLLFGSIISAVDPVAVLAVFEEI). Residues 250–252 (HIN) are Cytoplasmic-facing. A helical transmembrane segment spans residues 253 to 283 (ELLHILVFGESLLNDAVTVVLYHLFEEFANY). Residues 284–287 (DHVG) lie on the Extracellular side of the membrane. A helical membrane pass occupies residues 288 to 322 (IVDIVLGFLSFFVVALGGVFVGVVYGVIAAFTSRF). Topologically, residues 323–328 (TAHIRV) are cytoplasmic. A helical transmembrane segment spans residues 329-341 (IEPLFVFLYSYMA). At 342–350 (YLSAELFHL) the chain is on the extracellular side. A helical transmembrane segment spans residues 351-371 (SGIMALIASGVVMRPYVEANI). Residues 372–373 (SH) lie on the Cytoplasmic side of the membrane. A helical membrane pass occupies residues 374 to 404 (KSHTTIKYFLKMWSSVSETLIFIFLGVSTVA). Residues 405–410 (GSHHWN) are Extracellular-facing. The chain crosses the membrane as a helical span at residues 411–438 (WTFVISTLLFCLIARVLGVLGLTWFINK). At 439–444 (FRIVKL) the chain is on the cytoplasmic side. The chain crosses the membrane as a helical span at residues 445–469 (TPKDQFIIAYGGLRGAIAFSLGYLL). Residues 470 to 475 (DKKHFP) lie on the Extracellular side of the membrane. Residues 476-505 (MCDLFLTAIITVIFFTVFVQGMTIRPLVDL) form a helical membrane-spanning segment. An interaction with TESC region spans residues 503 to 545 (VDLLAVKKKQETKRSINEEIHTQFLDHLLTGIEDICGHYGHHH). Over 506–816 (LAVKKKQETK…EGEPFIPKGQ (311 aa)) the chain is Cytoplasmic. The PI(4,5)P2-binding region stretch occupies residues 509 to 516 (KKKQETKR). Residues 515–545 (KRSINEEIHTQFLDHLLTGIEDICGHYGHHH) are interaction with CHP2. Positions 540–545 (HYGHHH) are confers pH-dependent PI(4,5)P2 binding. The segment at 552–560 (RFNKKYVKK) is PI(4,5)P2-binding region. 2 positions are modified to phosphoserine: Ser599 and Ser602. Residue Thr603 is modified to Phosphothreonine. A phosphoserine mark is found at Ser605 and Ser648. An interaction with TESC region spans residues 633-816 (KILRNNLQKT…EGEPFIPKGQ (184 aa)). The segment at 633-816 (KILRNNLQKT…EGEPFIPKGQ (184 aa)) is interaction with CALM1. An interaction with PPP3CA region spans residues 684–687 (LTVP). Residues Ser693, Ser697, and Ser703 each carry the phosphoserine modification. The interaction with PPP3CA stretch occupies residues 715-720 (PVITID). 6 positions are modified to phosphoserine: Ser723, Ser726, Ser729, Ser786, Ser788, and Ser797. Residues 748–816 (PRVAEEAAEE…EGEPFIPKGQ (69 aa)) are disordered. A compositionally biased stretch (polar residues) spans 783-792 (PSDSPSSQRM).

It belongs to the monovalent cation:proton antiporter 1 (CPA1) transporter (TC 2.A.36) family. Homodimer; dimerization is crucial for its function. Oligomer. Interacts with CALM in a calcium-dependent manner. Interacts with TESC. Interacts (via the juxtamembrane region of the cytoplasmic C-terminal domain) with CHP1; the interaction occurs at the plasma membrane in a calcium-dependent manner. Interacts with CHP2; the interaction occurs in a calcium-dependent manner. Interacts with EZR; regulates the cytoskeletal interactions of SLC9A1 and promotes stress fiber formation. In terms of processing, ubiquitinated, leading to its degradation by the proteasome. Ubiquitination is reduced by CHP1. Post-translationally, O-glycosylated. Palmitoylated; may play a major role in SLC9A1 regulation. In terms of processing, phosphorylation at Ser-648 by AKT1 reduces SLC9A1 binding to CALM1. In terms of tissue distribution, kidney and intestine.

The protein localises to the cell membrane. It is found in the basolateral cell membrane. The catalysed reaction is Na(+)(in) + H(+)(out) = Na(+)(out) + H(+)(in). It catalyses the reaction Li(+)(out) + H(+)(in) = Li(+)(in) + H(+)(out). The enzyme catalyses Li(+)(in) + Na(+)(out) = Li(+)(out) + Na(+)(in). With respect to regulation, activated at acidic pHs. Inhibited by cariporide and eniporide. Phosphatidylinositol 4,5-bisphosphate (PI(4,5)P2) and phosphatidylinositol 3,4,5-trisphosphate (PI(3,4,5)P3) bind and differentially regulate SLC9A1 activity. Electroneutral Na(+) /H(+) antiporter that extrudes Na(+) in exchange for external protons driven by the inward sodium ion chemical gradient, protecting cells from acidification that occurs from metabolism. Exchanges intracellular H(+) ions for extracellular Na(+) in 1:1 stoichiometry. Plays a key role in maintening intracellular pH neutral and cell volume, and thus is important for cell growth, proliferation, migration and survival. In addition, can transport lithium Li(+) and functions also as a Na(+)/Li(+) antiporter. SLC9A1 also functions in membrane anchoring and organization of scaffolding complexes that coordinate signaling inputs. This is Sodium/hydrogen exchanger 1 (SLC9A1) from Oryctolagus cuniculus (Rabbit).